A 430-amino-acid chain; its full sequence is Adenylosuccinate synthetase (430 aa).

GTP-binding positions include 12–18 (GDEGKGK) and 40–42 (GHT). The active-site Proton acceptor is Asp13. The Mg(2+) site is built by Asp13 and Gly40. Residues 13–16 (DEGK), 38–41 (NAGH), Thr128, Arg142, Gln223, Thr238, and Arg302 contribute to the IMP site. Residue His41 is the Proton donor of the active site. 298–304 (TTTGRPR) serves as a coordination point for substrate. Residues Arg304, 330–332 (SID), and 413–415 (SVG) contribute to the GTP site.

Belongs to the adenylosuccinate synthetase family. As to quaternary structure, homodimer. Mg(2+) is required as a cofactor.

It localises to the cytoplasm. The enzyme catalyses IMP + L-aspartate + GTP = N(6)-(1,2-dicarboxyethyl)-AMP + GDP + phosphate + 2 H(+). It participates in purine metabolism; AMP biosynthesis via de novo pathway; AMP from IMP: step 1/2. Functionally, plays an important role in the de novo pathway of purine nucleotide biosynthesis. Catalyzes the first committed step in the biosynthesis of AMP from IMP. The chain is Adenylosuccinate synthetase from Lactococcus lactis subsp. cremoris (strain SK11).